The sequence spans 689 residues: Glycine--tRNA ligase beta subunit (689 aa).

This sequence belongs to the class-II aminoacyl-tRNA synthetase family. Tetramer of two alpha and two beta subunits.

Its subcellular location is the cytoplasm. It carries out the reaction tRNA(Gly) + glycine + ATP = glycyl-tRNA(Gly) + AMP + diphosphate. The chain is Glycine--tRNA ligase beta subunit from Actinobacillus pleuropneumoniae serotype 3 (strain JL03).